A 274-amino-acid polypeptide reads, in one-letter code: NADH-ubiquinone oxidoreductase chain 2 (274 aa).

8 helical membrane passes run 28–48, 54–74, 79–99, 107–127, 128–148, 171–191, 206–226, and 254–274; these read MIIMSALLLKSGAAPFHFWFP, LTWMNALMLMTWQKIAPLMLI, IKYLLLISVILSVIIGAIGGL, LMAFSSINHLGWMLSSLMFSE, SIWLIYFFFYSFLSFVLTFMF, FTLFMNFLSLGGLPPFLGFLP, FLLTLMMMSTLITLFFYLRIC, and LIMTFFSIFGLFMISLFYFMF.

This sequence belongs to the complex I subunit 2 family.

Its subcellular location is the mitochondrion inner membrane. The enzyme catalyses a ubiquinone + NADH + 5 H(+)(in) = a ubiquinol + NAD(+) + 4 H(+)(out). In terms of biological role, core subunit of the mitochondrial membrane respiratory chain NADH dehydrogenase (Complex I) that is believed to belong to the minimal assembly required for catalysis. Complex I functions in the transfer of electrons from NADH to the respiratory chain. The immediate electron acceptor for the enzyme is believed to be ubiquinone. This is NADH-ubiquinone oxidoreductase chain 2 (mt:ND2) from Drosophila sechellia (Fruit fly).